The sequence spans 998 residues: Protein Smaug (998 aa).

Residues 1 to 37 are compositionally biased toward polar residues; the sequence is MKYATGTDNAMTSGISGQTNNSNSASNEMQPTTSTPT. Disordered regions lie at residues 1-45, 50-69, and 329-370; these read MKYA…EATS, TATY…QSQP, and LCPA…GSSS. The segment covering 329–338 has biased composition (low complexity); that stretch reads LCPASGSRSS. Serine 564 and serine 575 each carry phosphoserine. The interval 583 to 763 is interaction with cup; it reads EFKPNYIKFH…KDLKFKLSKM (181 aa). The 55-residue stretch at 600-654 folds into the SAM domain; the sequence is GIGLWLKSLRLHKYIELFKNMTYEEMLLITEDFLQSVGVTKGASHKLALCIDKLK. Disordered regions lie at residues 773-892 and 942-977; these read HVKP…MQQM and NNGS…QQPK. 2 stretches are compositionally biased toward polar residues: residues 801-822 and 854-864; these read KSGS…NFSL and HQPQYKSSSYP. Serine 971 carries the phosphoserine modification.

It belongs to the SMAUG family. In terms of assembly, interacts with oskar (osk). Binds to the 3'-UTR of nos. Interacts with cup, which in turn recruits eIF4-E, leading to an indirect interaction between smg and eIF4-E that prevents mRNA translation.

Its subcellular location is the cytoplasm. Translation regulator that binds to the 3'-UTR of specific mRNAs such as nanos (nos) and prevent their translation. Prevents translation of unlocalized nos in the bulk cytoplasm via the recruitment of cup. This is Protein Smaug from Drosophila simulans (Fruit fly).